We begin with the raw amino-acid sequence, 233 residues long: Aspartate/glutamate leucyltransferase (233 aa).

The protein belongs to the R-transferase family. Bpt subfamily.

It localises to the cytoplasm. The enzyme catalyses N-terminal L-glutamyl-[protein] + L-leucyl-tRNA(Leu) = N-terminal L-leucyl-L-glutamyl-[protein] + tRNA(Leu) + H(+). The catalysed reaction is N-terminal L-aspartyl-[protein] + L-leucyl-tRNA(Leu) = N-terminal L-leucyl-L-aspartyl-[protein] + tRNA(Leu) + H(+). Functionally, functions in the N-end rule pathway of protein degradation where it conjugates Leu from its aminoacyl-tRNA to the N-termini of proteins containing an N-terminal aspartate or glutamate. This chain is Aspartate/glutamate leucyltransferase, found in Vibrio parahaemolyticus serotype O3:K6 (strain RIMD 2210633).